The following is a 454-amino-acid chain: Probable ECA polymerase (454 aa).

The next 11 helical transmembrane spans lie at 3–23, 39–59, 61–81, 119–139, 154–174, 180–200, 201–221, 222–242, 340–360, 377–397, and 409–429; these read LGQFGGLFCIYLIAVIFILTL, FSMLYLLTFYFGFPLTCMLVF, FGVAVVPVEYLLYAMLSATAF, LALVAVGTVGIFFMQNGFLLF, GVALKRFFYFFIPAMLVVYFL, AWFFFLASTVAFGILTYVIVG, GTRANIIIAFSLFLFIGIVRG, WITLWMLAAAGVFGIVGMFWL, LVVMGGVLFIPLGAIVVGLII, YKAAILQSFCFGAVFNIIVLA, and VFFCVIFGACLVLAKLLYWLF.

The protein belongs to the WzyE family. As to quaternary structure, probably part of a complex composed of WzxE, WzyE and WzzE.

The protein localises to the cell inner membrane. It participates in bacterial outer membrane biogenesis; enterobacterial common antigen biosynthesis. Functionally, probably involved in the polymerization of enterobacterial common antigen (ECA) trisaccharide repeat units. The protein is Probable ECA polymerase of Yersinia pseudotuberculosis serotype O:1b (strain IP 31758).